The following is a 482-amino-acid chain: Beta-1,3-glucan-binding protein 2 (482 aa).

A signal peptide spans 1-18; sequence MWIKSVCLFATIAGCLGQ. One can recognise a CBM39 domain in the interval 23–122; it reads YKVPDAKLEA…GEWTVTEFVN (100 aa). N-linked (GlcNAc...) asparagine glycosylation is present at N124. The disordered stretch occupies residues 127 to 153; sequence VVDTSTAPPPVAPAVSEEDQSPGPQWR. The region spanning 128–482 is the GH16 domain; that stretch reads VDTSTAPPPV…KVDYVRVYAL (355 aa). N-linked (GlcNAc...) asparagine glycosylation is present at N189.

In terms of assembly, monomer. N-glycosylated. As to expression, cuticle and fat body.

It localises to the secreted. Its function is as follows. Involved in the recognition of invading microorganisms. Binds specifically to beta-1,3-glucan and lipoteichoic acid and causes aggregation of invading microorganisms. Binding to beta-1,3-glucan activates the phenoloxidase cascade. The sequence is that of Beta-1,3-glucan-binding protein 2 from Manduca sexta (Tobacco hawkmoth).